We begin with the raw amino-acid sequence, 118 residues long: Large ribosomal subunit protein bL19 (118 aa).

The protein belongs to the bacterial ribosomal protein bL19 family.

Functionally, this protein is located at the 30S-50S ribosomal subunit interface and may play a role in the structure and function of the aminoacyl-tRNA binding site. This is Large ribosomal subunit protein bL19 from Salinispora tropica (strain ATCC BAA-916 / DSM 44818 / JCM 13857 / NBRC 105044 / CNB-440).